The primary structure comprises 253 residues: HTH-type transcriptional repressor DasR (253 aa).

Positions 16–86 constitute an HTH gntR-type domain; it reads RAQRVPKYYR…QGKGTFVAKP (71 aa). The segment at residues 46-65 is a DNA-binding region (H-T-H motif); that stretch reads ERTLAAEFDTSRTTVPQALQ.

It localises to the cytoplasm. Functionally, global regulator that is part of the nutrient-sensing system. In the absence of glucosamine 6-P (GlcN6P), represses the phosphotransferase system (PTS) specific for the uptake of N-acetylglucosamine (PTSNag), and genes involved in the metabolism of chitin, as well as several genes involved in development, thereby linking carbon availability to morphogenesis. Regulates the dasABC transport operon involved in glucose-related morphogenesis. Essential for development. The chain is HTH-type transcriptional repressor DasR (dasR) from Streptomyces griseus.